Here is a 291-residue protein sequence, read N- to C-terminus: S-adenosylmethionine uptake transporter (291 aa).

Transmembrane regions (helical) follow at residues 4-24 (ALKT…SSSA), 41-61 (VAFF…VYYG), 74-91 (ILRG…TYGL), 98-118 (TATV…VFFL), 121-141 (NIIW…VITL), 148-168 (FNPE…LDII), 178-198 (MISM…PAAA), 206-226 (LFEL…LFLL), 237-257 (ATAP…YFIF), and 260-280 (FPDK…LFII). 2 consecutive EamA domains span residues 21–141 (SSSA…VITL) and 160–280 (ISFA…LFII).

Belongs to the drug/metabolite transporter (DMT) superfamily. 10 TMS drug/metabolite exporter (DME) (TC 2.A.7.3) family.

Its subcellular location is the cell inner membrane. Transports S-adenosylmethionine. In Rickettsia bellii (strain RML369-C), this protein is S-adenosylmethionine uptake transporter (sam).